The primary structure comprises 1384 residues: DNA-directed RNA polymerase subunit beta (1384 aa).

Belongs to the RNA polymerase beta chain family. In terms of assembly, the RNAP catalytic core consists of 2 alpha, 1 beta, 1 beta' and 1 omega subunit. When a sigma factor is associated with the core the holoenzyme is formed, which can initiate transcription.

The catalysed reaction is RNA(n) + a ribonucleoside 5'-triphosphate = RNA(n+1) + diphosphate. DNA-dependent RNA polymerase catalyzes the transcription of DNA into RNA using the four ribonucleoside triphosphates as substrates. The chain is DNA-directed RNA polymerase subunit beta from Stenotrophomonas maltophilia (strain R551-3).